Reading from the N-terminus, the 269-residue chain is Peptide deformylase 1A, chloroplastic/mitochondrial (269 aa).

The N-terminal 60 residues, 1–60 (MGLHRDEATAMETLFRVSLRLLPVSAAVTCRSIRFPVSRPGSSHLLNRKLYNLPTSSSSS), are a transit peptide targeting the chloroplast and mitochondrion. Substrate is bound by residues 123–126 (PGVG) and G187. Residue C188 participates in Zn(2+) binding. Residues 191–196 (VDGFRA) are dimerization. Zn(2+) is bound at residue H230. E231 is an active-site residue. Residue H234 coordinates Zn(2+). A dimerization region spans residues 236–254 (DGNLYVDKMVPRTFRTVDN).

This sequence belongs to the polypeptide deformylase family. Homodimer. Zn(2+) serves as cofactor. As to expression, expressed in roots, leaves, flowers and siliques.

Its subcellular location is the plastid. It is found in the chloroplast stroma. The protein resides in the mitochondrion. It carries out the reaction N-terminal N-formyl-L-methionyl-[peptide] + H2O = N-terminal L-methionyl-[peptide] + formate. Inhibited by actinonin. Its function is as follows. Removes the formyl group from the N-terminal Met of newly synthesized proteins. The chain is Peptide deformylase 1A, chloroplastic/mitochondrial (PDF1A) from Arabidopsis thaliana (Mouse-ear cress).